The primary structure comprises 120 residues: Ribosome-binding factor A (120 aa).

It belongs to the RbfA family. In terms of assembly, monomer. Binds 30S ribosomal subunits, but not 50S ribosomal subunits or 70S ribosomes.

Its subcellular location is the cytoplasm. One of several proteins that assist in the late maturation steps of the functional core of the 30S ribosomal subunit. Associates with free 30S ribosomal subunits (but not with 30S subunits that are part of 70S ribosomes or polysomes). Required for efficient processing of 16S rRNA. May interact with the 5'-terminal helix region of 16S rRNA. This chain is Ribosome-binding factor A, found in Dictyoglomus thermophilum (strain ATCC 35947 / DSM 3960 / H-6-12).